The primary structure comprises 166 residues: Transcriptional repressor NrdR (166 aa).

Residues 3-34 (CIKCGNMEDKVIDSRPIKEGKSIRRRRECLRC) fold into a zinc finger. The 91-residue stretch at 49-139 (LFVKKRNGSI…VYCKFHDAKD (91 aa)) folds into the ATP-cone domain.

The protein belongs to the NrdR family. Zn(2+) is required as a cofactor.

In terms of biological role, negatively regulates transcription of bacterial ribonucleotide reductase nrd genes and operons by binding to NrdR-boxes. This is Transcriptional repressor NrdR from Methylacidiphilum infernorum (isolate V4) (Methylokorus infernorum (strain V4)).